A 703-amino-acid chain; its full sequence is Zinc finger protein 750 (703 aa).

The CCHC-type zinc-finger motif lies at 25–51; the sequence is YKCFQCPFTCNEKSHLFNHMKYGLCKN. The Zn(2+) site is built by Cys-27, Cys-30, His-43, and Cys-49. Disordered regions lie at residues 60–96, 121–147, 362–617, and 633–703; these read DRVP…SGLS, GPHR…EAAV, PSKL…EQKQ, and NVEP…TRVS. The span at 67–78 shows a compositional bias: polar residues; that stretch reads KPNSSDPKQTNQ. Residues 79–93 are compositionally biased toward low complexity; the sequence is PDPVVKPTSSKPVPS. Residues 375-399 show a composition bias toward basic and acidic residues; the sequence is TELEKQSPTPEAKEPSKDGQRDTEG. Residues 418 to 428 show a composition bias toward polar residues; the sequence is SPTNFTQTSQP. The segment covering 583-592 has biased composition (low complexity); it reads SSGDGPDPSS. Residues 605–616 show a composition bias toward basic and acidic residues; it reads QDIRAADSDEQK.

It is found in the nucleus. In terms of biological role, transcription factor involved in epidermis differentiation. Required for terminal epidermal differentiation: acts downstream of p63/TP63 and activates expression of late epidermal differentiation genes. Specifically binds to the promoter of KLF4 and promotes its expression. The polypeptide is Zinc finger protein 750 (ZNF750) (Bos taurus (Bovine)).